We begin with the raw amino-acid sequence, 490 residues long: ATP synthase subunit beta, chloroplastic (490 aa).

Thr-6 carries the post-translational modification Phosphothreonine. Ser-13 carries the phosphoserine modification. 172 to 179 (GGAGVGKT) contributes to the ATP binding site.

The protein belongs to the ATPase alpha/beta chains family. F-type ATPases have 2 components, CF(1) - the catalytic core - and CF(0) - the membrane proton channel. CF(1) has five subunits: alpha(3), beta(3), gamma(1), delta(1), epsilon(1). CF(0) has four main subunits: a(1), b(1), b'(1) and c(9-12).

It localises to the plastid. It is found in the chloroplast thylakoid membrane. The enzyme catalyses ATP + H2O + 4 H(+)(in) = ADP + phosphate + 5 H(+)(out). Produces ATP from ADP in the presence of a proton gradient across the membrane. The catalytic sites are hosted primarily by the beta subunits. The polypeptide is ATP synthase subunit beta, chloroplastic (Aethionema grandiflorum (Persian stone-cress)).